Consider the following 234-residue polypeptide: Glycoprotein BDLF3 (234 aa).

A signal peptide spans 1-28 (MAHARDKAGAVMAMILICETSLIWTSSG). The segment at 29 to 62 (SSTASAGNVTGTTAVTTPSPSASGPSTNQSTTLT) is disordered. 9 N-linked (GlcNAc...) asparagine; by host glycosylation sites follow: Asn36, Asn56, Asn77, Asn96, Asn101, Asn110, Asn127, Asn144, and Asn159. Residues 116–138 (AGTGTSTGVTSNVTTRSSSTTSA) form a disordered region. A helical membrane pass occupies residues 187–207 (LVFVGLTFLMLILIFAAGLMM).

The protein belongs to the Epstein-Barr virus BDLF3 protein family.

It localises to the membrane. The chain is Glycoprotein BDLF3 from Homo sapiens (Human).